A 195-amino-acid chain; its full sequence is ATP-dependent Clp protease proteolytic subunit (195 aa).

Catalysis depends on Ser-98, which acts as the Nucleophile. His-123 is an active-site residue.

Belongs to the peptidase S14 family. As to quaternary structure, fourteen ClpP subunits assemble into 2 heptameric rings which stack back to back to give a disk-like structure with a central cavity, resembling the structure of eukaryotic proteasomes.

It is found in the cytoplasm. The catalysed reaction is Hydrolysis of proteins to small peptides in the presence of ATP and magnesium. alpha-casein is the usual test substrate. In the absence of ATP, only oligopeptides shorter than five residues are hydrolyzed (such as succinyl-Leu-Tyr-|-NHMec, and Leu-Tyr-Leu-|-Tyr-Trp, in which cleavage of the -Tyr-|-Leu- and -Tyr-|-Trp bonds also occurs).. Cleaves peptides in various proteins in a process that requires ATP hydrolysis. Has a chymotrypsin-like activity. Plays a major role in the degradation of misfolded proteins. The polypeptide is ATP-dependent Clp protease proteolytic subunit (Wolinella succinogenes (strain ATCC 29543 / DSM 1740 / CCUG 13145 / JCM 31913 / LMG 7466 / NCTC 11488 / FDC 602W) (Vibrio succinogenes)).